The primary structure comprises 305 residues: MPLLRIATRKSLLAMWQSEYVAARLRMLCPDLDVVLVPMSTRGDEILDRSLAAIGGKGLFLKELELAMLRGDADCAVHSLKDVPMDLEPPFMLAAVLSRDDPADALISNVYLSLESLPIGARVATSSLRRQAQLRFYRPDLRLFDLRGNVNTRLAKLDNGDYDAIVLACAGLRRLGLEQRMTARLAPPEWLPAPGQGAIAVESLTEDARIGTLLAGLDDLPTRKCVIAERTMNRALHGSCHVPVGAYASYEVGGMRLQGLVGCVADGRLVRAELCSAKDEGDMLGRAVAQCLLDAGAAELLAATA.

Cys240 is subject to S-(dipyrrolylmethanemethyl)cysteine.

It belongs to the HMBS family. As to quaternary structure, monomer. Dipyrromethane is required as a cofactor.

The enzyme catalyses 4 porphobilinogen + H2O = hydroxymethylbilane + 4 NH4(+). It participates in porphyrin-containing compound metabolism; protoporphyrin-IX biosynthesis; coproporphyrinogen-III from 5-aminolevulinate: step 2/4. Tetrapolymerization of the monopyrrole PBG into the hydroxymethylbilane pre-uroporphyrinogen in several discrete steps. The sequence is that of Porphobilinogen deaminase from Xylella fastidiosa (strain M23).